Here is a 245-residue protein sequence, read N- to C-terminus: Uridylate kinase (245 aa).

Lysine 12–glycine 15 lines the ATP pocket. Positions glycine 20–glycine 25 are involved in allosteric activation by GTP. Glycine 54 lines the UMP pocket. Residues glycine 55 and arginine 59 each coordinate ATP. UMP contacts are provided by residues aspartate 74 and isoleucine 135–threonine 142. Residues asparagine 163, tyrosine 169, and aspartate 172 each coordinate ATP.

This sequence belongs to the UMP kinase family. In terms of assembly, homohexamer.

The protein resides in the cytoplasm. The enzyme catalyses UMP + ATP = UDP + ADP. Its pathway is pyrimidine metabolism; CTP biosynthesis via de novo pathway; UDP from UMP (UMPK route): step 1/1. With respect to regulation, allosterically activated by GTP. Inhibited by UTP. Functionally, catalyzes the reversible phosphorylation of UMP to UDP. This is Uridylate kinase from Streptococcus thermophilus (strain ATCC BAA-250 / LMG 18311).